The chain runs to 289 residues: Oxaloacetate decarboxylase (289 aa).

Ser50 lines the substrate pocket. Asp88 contacts Mg(2+). Positions 159 and 235 each coordinate substrate.

The protein belongs to the isocitrate lyase/PEP mutase superfamily. Oxaloacetate decarboxylase family. As to quaternary structure, homotetramer; dimer of dimers. The cofactor is Mg(2+).

It carries out the reaction oxaloacetate + H(+) = pyruvate + CO2. Functionally, catalyzes the decarboxylation of oxaloacetate into pyruvate. Seems to play a role in maintaining cellular concentrations of bicarbonate and pyruvate. The chain is Oxaloacetate decarboxylase from Pseudomonas fluorescens (strain ATCC BAA-477 / NRRL B-23932 / Pf-5).